The chain runs to 181 residues: Large ribosomal subunit protein uL10 (181 aa).

Belongs to the universal ribosomal protein uL10 family. As to quaternary structure, part of the ribosomal stalk of the 50S ribosomal subunit. The N-terminus interacts with L11 and the large rRNA to form the base of the stalk. The C-terminus forms an elongated spine to which L12 dimers bind in a sequential fashion forming a multimeric L10(L12)X complex.

In terms of biological role, forms part of the ribosomal stalk, playing a central role in the interaction of the ribosome with GTP-bound translation factors. The protein is Large ribosomal subunit protein uL10 of Chloroflexus aggregans (strain MD-66 / DSM 9485).